Reading from the N-terminus, the 390-residue chain is tRNA-specific 2-thiouridylase MnmA (390 aa).

ATP contacts are provided by residues 33-40 (AMSGGVDS) and M59. The active-site Nucleophile is the C131. The cysteines at positions 131 and 230 are disulfide-linked. G155 contributes to the ATP binding site. An interaction with tRNA region spans residues 180-182 (KDQ). The Cysteine persulfide intermediate role is filled by C230.

The protein belongs to the MnmA/TRMU family.

The protein localises to the cytoplasm. It catalyses the reaction S-sulfanyl-L-cysteinyl-[protein] + uridine(34) in tRNA + AH2 + ATP = 2-thiouridine(34) in tRNA + L-cysteinyl-[protein] + A + AMP + diphosphate + H(+). Catalyzes the 2-thiolation of uridine at the wobble position (U34) of tRNA, leading to the formation of s(2)U34. The chain is tRNA-specific 2-thiouridylase MnmA from Symbiobacterium thermophilum (strain DSM 24528 / JCM 14929 / IAM 14863 / T).